Consider the following 604-residue polypeptide: Elongation factor 4 (604 aa).

One can recognise a tr-type G domain in the interval 8–190; sequence DKIRNFSIIA…AIVNRLPPPR (183 aa). Residues 20-25 and 137-140 contribute to the GTP site; these read DHGKST and NKID.

The protein belongs to the TRAFAC class translation factor GTPase superfamily. Classic translation factor GTPase family. LepA subfamily.

It is found in the cell inner membrane. The catalysed reaction is GTP + H2O = GDP + phosphate + H(+). Functionally, required for accurate and efficient protein synthesis under certain stress conditions. May act as a fidelity factor of the translation reaction, by catalyzing a one-codon backward translocation of tRNAs on improperly translocated ribosomes. Back-translocation proceeds from a post-translocation (POST) complex to a pre-translocation (PRE) complex, thus giving elongation factor G a second chance to translocate the tRNAs correctly. Binds to ribosomes in a GTP-dependent manner. The protein is Elongation factor 4 of Hyphomonas neptunium (strain ATCC 15444).